The chain runs to 947 residues: Bifunctional glutamine synthetase adenylyltransferase/adenylyl-removing enzyme (947 aa).

Residues 1–440 (MTPLSSPLSQ…VFNELIGDDE (440 aa)) are adenylyl removase. An adenylyl transferase region spans residues 450-947 (SEPWREVWQD…ASWRKWLVAV (498 aa)).

The protein belongs to the GlnE family. Mg(2+) is required as a cofactor.

The enzyme catalyses [glutamine synthetase]-O(4)-(5'-adenylyl)-L-tyrosine + phosphate = [glutamine synthetase]-L-tyrosine + ADP. The catalysed reaction is [glutamine synthetase]-L-tyrosine + ATP = [glutamine synthetase]-O(4)-(5'-adenylyl)-L-tyrosine + diphosphate. Its function is as follows. Involved in the regulation of glutamine synthetase GlnA, a key enzyme in the process to assimilate ammonia. When cellular nitrogen levels are high, the C-terminal adenylyl transferase (AT) inactivates GlnA by covalent transfer of an adenylyl group from ATP to specific tyrosine residue of GlnA, thus reducing its activity. Conversely, when nitrogen levels are low, the N-terminal adenylyl removase (AR) activates GlnA by removing the adenylyl group by phosphorolysis, increasing its activity. The regulatory region of GlnE binds the signal transduction protein PII (GlnB) which indicates the nitrogen status of the cell. The chain is Bifunctional glutamine synthetase adenylyltransferase/adenylyl-removing enzyme from Salmonella gallinarum (strain 287/91 / NCTC 13346).